Reading from the N-terminus, the 476-residue chain is ATP synthase subunit beta (476 aa).

Position 157–164 (157–164) interacts with ATP; it reads GGAGVGKT.

This sequence belongs to the ATPase alpha/beta chains family. As to quaternary structure, F-type ATPases have 2 components, CF(1) - the catalytic core - and CF(0) - the membrane proton channel. CF(1) has five subunits: alpha(3), beta(3), gamma(1), delta(1), epsilon(1). CF(0) has three main subunits: a(1), b(2) and c(9-12). The alpha and beta chains form an alternating ring which encloses part of the gamma chain. CF(1) is attached to CF(0) by a central stalk formed by the gamma and epsilon chains, while a peripheral stalk is formed by the delta and b chains.

The protein resides in the cell membrane. The catalysed reaction is ATP + H2O + 4 H(+)(in) = ADP + phosphate + 5 H(+)(out). Produces ATP from ADP in the presence of a proton gradient across the membrane. The catalytic sites are hosted primarily by the beta subunits. The polypeptide is ATP synthase subunit beta (Mycoplasma genitalium (strain ATCC 33530 / DSM 19775 / NCTC 10195 / G37) (Mycoplasmoides genitalium)).